The following is a 420-amino-acid chain: Reticulon-4 receptor-like 2 (420 aa).

A signal peptide spans 1–30; it reads MLPGLRRLLQGPASACLLLTLLALPPVTPS. 2 disulfide bridges follow: Cys-31–Cys-37 and Cys-35–Cys-46. Residues 31-60 form the LRRNT domain; sequence CPMLCTCYSSPPTVSCQANNFSSVPLSLPP. A glycan (N-linked (GlcNAc...) asparagine) is linked at Asn-50. LRR repeat units lie at residues 61–82, 83–104, 107–129, 132–153, 156–177, 180–201, 204–225, and 228–249; these read STQR…TFGP, NLLT…TFRH, ALEE…TFQG, RLQS…IFRG, SLQY…LFAD, NLSH…VFRG, SLDR…AFHG, and RLTI…ALAD. Asn-93 carries N-linked (GlcNAc...) asparagine glycosylation. A glycan (N-linked (GlcNAc...) asparagine) is linked at Asn-236. The region spanning 261–312 is the LRRCT domain; that stretch reads NPWACDCRARPLWAWFQRARVSSSDVTCATPPERQGRDLRTLRDTDFQACPP. 2 disulfide bridges follow: Cys-265–Cys-288 and Cys-267–Cys-310. The segment at 286–390 is disordered; it reads VTCATPPERQ…GEQTCPGAAC (105 aa). The segment covering 294–306 has biased composition (basic and acidic residues); the sequence is RQGRDLRTLRDTD. The tract at residues 315-327 is important for interaction with MAG; it reads PTRPGSRARGNSS. The segment covering 351-360 has biased composition (basic and acidic residues); that stretch reads LPAEDSRGRQ. Cys-390 carries GPI-anchor amidated cysteine lipidation. Positions 391–420 are cleaved as a propeptide — removed in mature form; sequence QAPADSRGPVLSAGLRTPLLCLLLLAPHHL.

This sequence belongs to the Nogo receptor family. Interaction with MAG is controversial, and may be indirect. Interacts with MAG. Does not interact with OMG and RTN4. Undergoes zinc metalloproteinase-mediated ectodomain shedding in neuroblastoma cells; is released both as a full-length ectodomain and an N-terminal fragment containing the leucine-rich repeat (LRR) region of the protein. Post-translationally, N-glycosylated. O-glycosylated. Contains terminal sialic acid groups on its glycan chains. As to expression, detected in adult brain, in neocortex, hippocampus, striatum and dorsal root ganglion neurons, and in retina (at protein level). In brain, detected in cerebral cortex and hippocampus. Weak or no expression detected in the cerebellum, thalamus or striatum.

It localises to the cell membrane. The protein resides in the cell projection. It is found in the dendrite. Its subcellular location is the perikaryon. The protein localises to the axon. It localises to the membrane raft. In terms of biological role, cell surface receptor that plays a functionally redundant role in the inhibition of neurite outgrowth mediated by MAG. Plays a functionally redundant role in postnatal brain development. Contributes to normal axon migration across the brain midline and normal formation of the corpus callosum. Does not seem to play a significant role in regulating axon regeneration in the adult central nervous system. Protects motoneurons against apoptosis; protection against apoptosis is probably mediated by MAG. Like other family members, plays a role in restricting the number dendritic spines and the number of synapses that are formed during brain development. Signaling mediates activation of Rho and downstream reorganization of the actin cytoskeleton. The sequence is that of Reticulon-4 receptor-like 2 from Rattus norvegicus (Rat).